Consider the following 479-residue polypeptide: Chromosomal replication initiator protein DnaA (479 aa).

Residues 1-74 (MFSGVVMAWQ…RSLTGVDSSI (74 aa)) are domain I, interacts with DnaA modulators. The domain II stretch occupies residues 74–142 (ITDVRFLEKK…SVPKNNASIR (69 aa)). Positions 143-360 (ALHPRYTFDE…SAITAIGARA (218 aa)) are domain III, AAA+ region. Residues G187, G189, K190, and S191 each coordinate ATP. A domain IV, binds dsDNA region spans residues 361–479 (RLMGGYIDMN…NLLSDKVKQI (119 aa)).

Belongs to the DnaA family. As to quaternary structure, oligomerizes as a right-handed, spiral filament on DNA at oriC.

Its subcellular location is the cytoplasm. Plays an essential role in the initiation and regulation of chromosomal replication. ATP-DnaA binds to the origin of replication (oriC) to initiate formation of the DNA replication initiation complex once per cell cycle. Binds the DnaA box (a 9 base pair repeat at the origin) and separates the double-stranded (ds)DNA. Forms a right-handed helical filament on oriC DNA; dsDNA binds to the exterior of the filament while single-stranded (ss)DNA is stabiized in the filament's interior. The ATP-DnaA-oriC complex binds and stabilizes one strand of the AT-rich DNA unwinding element (DUE), permitting loading of DNA polymerase. After initiation quickly degrades to an ADP-DnaA complex that is not apt for DNA replication. Binds acidic phospholipids. This chain is Chromosomal replication initiator protein DnaA, found in Desulfotalea psychrophila (strain LSv54 / DSM 12343).